A 109-amino-acid polypeptide reads, in one-letter code: Transmembrane protein 233 (109 aa).

Residues 1–30 (MSQYAPSPDFKRALDSSPEANTEDDKTEED) are disordered. Residues 1 to 41 (MSQYAPSPDFKRALDSSPEANTEDDKTEEDVPMPKNYLWLT) are Cytoplasmic-facing. Over residues 21–30 (NTEDDKTEED) the composition is skewed to acidic residues. An intramembrane region (helical) is located at residues 42–62 (IVSCFCPAYPINIVALVFSIM). The Cytoplasmic portion of the chain corresponds to 63–84 (SLNSYNDGDYEGARRLGRNAKW). A helical transmembrane segment spans residues 85–105 (VAIASIIIGLLIIGISCAVHF). Topologically, residues 106 to 109 (TRNA) are extracellular.

It belongs to the CD225/Dispanin family. In terms of assembly, interacts with the giant stinging tree toxin ExTxA (AC P0DQP3). Interacts with Nav1.7/SCN9A. Interacts with Nav1.1/SCN1A, Nav1.2/SCN2A, Nav1.3/SCN3A, Nav1.4/SCN4A, Nav1.5/SCN5A, and Nav1.6/SCN8A.

It localises to the cell membrane. Its function is as follows. Probable accessory protein of voltage-gated sodium channels. In Homo sapiens (Human), this protein is Transmembrane protein 233.